Here is a 46-residue protein sequence, read N- to C-terminus: Large ribosomal subunit protein bL33B (46 aa).

It belongs to the bacterial ribosomal protein bL33 family.

The polypeptide is Large ribosomal subunit protein bL33B (rpmG2) (Mycoplasmopsis pulmonis (strain UAB CTIP) (Mycoplasma pulmonis)).